We begin with the raw amino-acid sequence, 107 residues long: Small ribosomal subunit protein bS18 (107 aa).

The protein belongs to the bacterial ribosomal protein bS18 family. As to quaternary structure, part of the 30S ribosomal subunit. Forms a tight heterodimer with protein bS6.

In terms of biological role, binds as a heterodimer with protein bS6 to the central domain of the 16S rRNA, where it helps stabilize the platform of the 30S subunit. The chain is Small ribosomal subunit protein bS18 from Mycoplasmopsis agalactiae (strain NCTC 10123 / CIP 59.7 / PG2) (Mycoplasma agalactiae).